Consider the following 594-residue polypeptide: MKKVMMLALALGASTSLAAPFVYPANWTSNKPGDVQTGGTFRSVNLQDFKTLNPFVSSESPNLPAVLSAGSLLGYNPVTGNYAPYMAEKYTQSADKRTFTFDIRKGMKWSDGKPITVDDWITAYTIDSNKDVGSNTFDYWTINNQPIKVTKVDSNTLKVVFPKADVTAIEFLSGIFLPQPTHVFMPVWKAKGAQGIKDMWTISTNPDNIVTSGPFMLDRYVRGERAILKKNPYFGEWNKDSAGKSLPYLDGIQINIVADANAQLAQFLAGNLDTYSPDNRDKLAQVKSAMDGGKVKGTLIPNASARASSDFMVFNMDDSATFKTKLFSNVKFRQAMSMLMNRDAMVDLALGGLGEPTYTSVYPVYKDWIPSGMDKYKFNPTAAAKLLAELGFTKKGSDGILVDKAGNKLEFTLITNAENNRRQSYAKVIQDEAKKVGVKINVSAIAFNQMTTLLDAKDNFGRRNFDAIIIGLTGGGQVYPVSGPSVVECKGLGDGGNLHMFNQSNKCRFPFETQAVNLFWKGRAEFDLAKRKAIAAQIQRNEMENQPYIQLAAQTVHFAWTDRVQGEYNRPQINSLNASTLFGPRDIALTWIKR.

The signal sequence occupies residues 1-18 (MKKVMMLALALGASTSLA).

The protein belongs to the bacterial solute-binding protein 5 family.

In terms of biological role, probably part of a binding-protein-dependent transport system. This Deinococcus radiodurans (strain ATCC 13939 / DSM 20539 / JCM 16871 / CCUG 27074 / LMG 4051 / NBRC 15346 / NCIMB 9279 / VKM B-1422 / R1) protein is Probable ABC transporter-binding protein DR_1571.